The chain runs to 130 residues: Large ribosomal subunit protein bL20 (130 aa).

The protein belongs to the bacterial ribosomal protein bL20 family.

Binds directly to 23S ribosomal RNA and is necessary for the in vitro assembly process of the 50S ribosomal subunit. It is not involved in the protein synthesizing functions of that subunit. In Leifsonia xyli subsp. xyli (strain CTCB07), this protein is Large ribosomal subunit protein bL20.